A 117-amino-acid polypeptide reads, in one-letter code: SGSCTLRTCWKKMPHFREVGDRLLERFNGAFKVMAGNDGKSVVPVGHNIKPPDKRDLIYSADSPDFCMANRKTGAPGTKGRLCNSTAMDMGGCDLLCCGRGHREETMVLEENCLCRF.

A lipid anchor (O-palmitoleoyl serine; by PORCN) is attached at serine 1. Cysteine 83 and cysteine 98 are joined by a disulfide. Asparagine 84 carries an N-linked (GlcNAc...) asparagine glycan.

The protein belongs to the Wnt family. Palmitoleoylation is required for efficient binding to frizzled receptors. Depalmitoleoylation leads to Wnt signaling pathway inhibition.

It localises to the secreted. The protein resides in the extracellular space. The protein localises to the extracellular matrix. Ligand for members of the frizzled family of seven transmembrane receptors. Probable developmental protein. May be a signaling molecule which affects the development of discrete regions of tissues. Is likely to signal over only few cell diameters. This chain is Protein Wnt-6 (WNT-6), found in Plethodon jordani (Red-cheeked salamander).